A 277-amino-acid polypeptide reads, in one-letter code: UBX domain-containing protein 10 (277 aa).

The interval 1–102 is disordered; sequence MAIEAPVNFA…APDEMPELLL (102 aa). The segment covering 16–31 has biased composition (polar residues); that stretch reads TVVSTAGDSSTWQPSS. The segment covering 35-50 has biased composition (basic residues); it reads HVIRPKSAKGRKRPNL. Positions 60 to 77 are enriched in low complexity; that stretch reads SPSALSSSPPPRSSGSPS. S88 is modified (phosphoserine). The 78-residue stretch at 191 to 268 folds into the UBX domain; it reads DEEPRLLLAV…GILHKSVLGI (78 aa).

The protein belongs to the UBXN10 family. In terms of assembly, interacts with CLUAP1; the interaction is direct and mediates interaction with the intraflagellar transport complex B (IFT-B). Interacts with VCP; the interaction is direct.

Its subcellular location is the cell projection. The protein resides in the cilium. Functionally, VCP/p97-binding protein required for ciliogenesis. Acts as a tethering factor that facilitates recruitment of VCP/p97 to the intraflagellar transport complex B (IFT-B) in cilia. UBX domain-containing proteins act as tethering factors for VCP/p97 and may specify substrate specificity of VCP/p97. This is UBX domain-containing protein 10 from Mus musculus (Mouse).